The sequence spans 418 residues: Serine--tRNA ligase (418 aa).

Threonine 231–glutamate 233 is an L-serine binding site. Arginine 262–glutamate 264 serves as a coordination point for ATP. Glutamate 285 contacts L-serine. Residue glutamate 349–serine 352 participates in ATP binding. Serine 384 serves as a coordination point for L-serine.

It belongs to the class-II aminoacyl-tRNA synthetase family. Type-1 seryl-tRNA synthetase subfamily. As to quaternary structure, homodimer. The tRNA molecule binds across the dimer.

Its subcellular location is the cytoplasm. It catalyses the reaction tRNA(Ser) + L-serine + ATP = L-seryl-tRNA(Ser) + AMP + diphosphate + H(+). The enzyme catalyses tRNA(Sec) + L-serine + ATP = L-seryl-tRNA(Sec) + AMP + diphosphate + H(+). The protein operates within aminoacyl-tRNA biosynthesis; selenocysteinyl-tRNA(Sec) biosynthesis; L-seryl-tRNA(Sec) from L-serine and tRNA(Sec): step 1/1. Its function is as follows. Catalyzes the attachment of serine to tRNA(Ser). Is also able to aminoacylate tRNA(Sec) with serine, to form the misacylated tRNA L-seryl-tRNA(Sec), which will be further converted into selenocysteinyl-tRNA(Sec). The chain is Serine--tRNA ligase from Coprothermobacter proteolyticus (strain ATCC 35245 / DSM 5265 / OCM 4 / BT).